Consider the following 472-residue polypeptide: Serralysin A (472 aa).

A propeptide spanning residues 1 to 17 is cleaved from the precursor; it reads MEKNLSSRDDDALHSLS. A Zn(2+)-binding site is contributed by H186. E187 is a catalytic residue. Zn(2+) is bound by residues H190 and Y221. R258, G260, T262, D290, G292, G293, T332, E334, G339, G341, D343, N348, A350, N352, G356, G357, A358, G359, D361, G365, G366, G367, G368, D370, G374, G375, G377, D379, D388, D395, and D405 together coordinate Ca(2+). 2 Hemolysin-type calcium-binding repeats span residues 337–354 and 355–372; these read IGGS…DNIL and RGGA…ADRL.

Belongs to the peptidase M10B family. Ca(2+) serves as cofactor. Zn(2+) is required as a cofactor.

The protein resides in the secreted. The enzyme catalyses Preferential cleavage of bonds with hydrophobic residues in P1'.. The protein is Serralysin A (prtA) of Dickeya chrysanthemi (Pectobacterium chrysanthemi).